Here is a 203-residue protein sequence, read N- to C-terminus: MPELTTAPGLLALVGLAAYLLGAIPFGLLIAKLFGLGNLREIGSGNIGATNVLRTGSKPAAAATLILDAGKGAFAVILARVLVGEDAAQIAGAAAFLGHCFPVYLKFNGGKGVATFFGTVIALSWPLGLAAGAIWLATAYTFRISSLSALMAALMTPIFAWGFGQRELVVLSLFLGFLIWIRHRENIIRLLSGTEPRIGAKKR.

5 helical membrane passes run 10 to 30, 59 to 79, 87 to 107, 116 to 136, and 168 to 188; these read LLALVGLAAYLLGAIPFGLLI, PAAAATLILDAGKGAFAVILA, AAQIAGAAAFLGHCFPVYLKF, FFGTVIALSWPLGLAAGAIWL, and LVVLSLFLGFLIWIRHRENII.

Belongs to the PlsY family. As to quaternary structure, probably interacts with PlsX.

The protein localises to the cell inner membrane. It carries out the reaction an acyl phosphate + sn-glycerol 3-phosphate = a 1-acyl-sn-glycero-3-phosphate + phosphate. The protein operates within lipid metabolism; phospholipid metabolism. In terms of biological role, catalyzes the transfer of an acyl group from acyl-phosphate (acyl-PO(4)) to glycerol-3-phosphate (G3P) to form lysophosphatidic acid (LPA). This enzyme utilizes acyl-phosphate as fatty acyl donor, but not acyl-CoA or acyl-ACP. In Dinoroseobacter shibae (strain DSM 16493 / NCIMB 14021 / DFL 12), this protein is Glycerol-3-phosphate acyltransferase.